A 281-amino-acid chain; its full sequence is MANLKALLLRIKSVKSIQKTTKVMQMISAAKLHRVQQKLENARKHLLEISNVIDSVDKDNVSDVFSKHKKEKVLLVIMSSDRGLCGNFNNLIVKFTKSYIEDLESDNKEVNLLFFGKKAYDMMYSQYSDKILNVLPDVKSITNFLYFKLFVYSSGVNFEKFDNVIVLFNKFYSTILQKPSAQELIPCNVEMSVLLKEMYQYEPTYIDVISTISLGYILNLMYIAFLENSASEHCSRMIAMESANRNTKDMLNKLALEYNRSRQASITTDLIEIISGFESLN.

The protein belongs to the ATPase gamma chain family. As to quaternary structure, F-type ATPases have 2 components, CF(1) - the catalytic core - and CF(0) - the membrane proton channel. CF(1) has five subunits: alpha(3), beta(3), gamma(1), delta(1), epsilon(1). CF(0) has three main subunits: a, b and c.

Its subcellular location is the cell inner membrane. Produces ATP from ADP in the presence of a proton gradient across the membrane. The gamma chain is believed to be important in regulating ATPase activity and the flow of protons through the CF(0) complex. In Ehrlichia canis (strain Jake), this protein is ATP synthase gamma chain.